An 89-amino-acid chain; its full sequence is HssA/B-like protein DDB_G0295685 (89 aa).

The protein belongs to the hssA/B family.

This Dictyostelium discoideum (Social amoeba) protein is HssA/B-like protein DDB_G0295685.